The following is an 803-amino-acid chain: Phenylalanine--tRNA ligase beta subunit (803 aa).

The 113-residue stretch at 39-151 (SMKFSGIKIG…KNAIIGEDIK (113 aa)) folds into the tRNA-binding domain. The B5 domain occupies 406-482 (PKKILIKLYK…RFYGFEKIPI (77 aa)). Positions 466 and 470 each coordinate Mg(2+). The FDX-ACB domain maps to 707-800 (SDIPFNYRDI…LKKNFLIEIR (94 aa)).

The protein belongs to the phenylalanyl-tRNA synthetase beta subunit family. Type 1 subfamily. Tetramer of two alpha and two beta subunits. Mg(2+) serves as cofactor.

The protein localises to the cytoplasm. It catalyses the reaction tRNA(Phe) + L-phenylalanine + ATP = L-phenylalanyl-tRNA(Phe) + AMP + diphosphate + H(+). The sequence is that of Phenylalanine--tRNA ligase beta subunit from Wigglesworthia glossinidia brevipalpis.